The sequence spans 336 residues: MTTYNLRLKAKSELTPHPTAQYWRKCQVEELFEMPFMELIFKAAQVHREHFDPQAIQLSTLLSIKTGGCPEECEYCPQSARYDTGLEKQVMMDVEEIVEKAKIAKARGASRFCMGAAWRGPKPKDIKVVSEIIGVVKALGLETCGTFGLLEDGMAEDLKQAGLDYYNHNLDTDPERYNKIVHTRNHDDRMDTLGKVRHAGLKVCCGGIVGMNETRPERAGLIASLANLDPQPESVPINQLIKVEGTPLENAEDLDWTEFVRTIAVARITMPKSYVRLSAGRTSMPEAMQTLCFMAGANSIFYGEKLLTTCNPEEDSDRLLMDKLDLYPLAYEPSDA.

The Radical SAM core domain maps to 54 to 281 (QAIQLSTLLS…KSYVRLSAGR (228 aa)). Residues cysteine 69, cysteine 73, and cysteine 76 each coordinate [4Fe-4S] cluster. [2Fe-2S] cluster is bound by residues cysteine 113, cysteine 144, cysteine 204, and arginine 276.

Belongs to the radical SAM superfamily. Biotin synthase family. As to quaternary structure, homodimer. Requires [4Fe-4S] cluster as cofactor. [2Fe-2S] cluster serves as cofactor.

The catalysed reaction is (4R,5S)-dethiobiotin + (sulfur carrier)-SH + 2 reduced [2Fe-2S]-[ferredoxin] + 2 S-adenosyl-L-methionine = (sulfur carrier)-H + biotin + 2 5'-deoxyadenosine + 2 L-methionine + 2 oxidized [2Fe-2S]-[ferredoxin]. The protein operates within cofactor biosynthesis; biotin biosynthesis; biotin from 7,8-diaminononanoate: step 2/2. Its function is as follows. Catalyzes the conversion of dethiobiotin (DTB) to biotin by the insertion of a sulfur atom into dethiobiotin via a radical-based mechanism. The protein is Biotin synthase of Actinobacillus pleuropneumoniae serotype 7 (strain AP76).